Reading from the N-terminus, the 154-residue chain is 6,7-dimethyl-8-ribityllumazine synthase (154 aa).

5-amino-6-(D-ribitylamino)uracil contacts are provided by residues Phe22, 56–58 (AFE), and 80–82 (TVI). 85 to 86 (ST) contacts (2S)-2-hydroxy-3-oxobutyl phosphate. Residue His88 is the Proton donor of the active site. Phe113 serves as a coordination point for 5-amino-6-(D-ribitylamino)uracil. Residue Arg127 participates in (2S)-2-hydroxy-3-oxobutyl phosphate binding.

The protein belongs to the DMRL synthase family.

The catalysed reaction is (2S)-2-hydroxy-3-oxobutyl phosphate + 5-amino-6-(D-ribitylamino)uracil = 6,7-dimethyl-8-(1-D-ribityl)lumazine + phosphate + 2 H2O + H(+). Its pathway is cofactor biosynthesis; riboflavin biosynthesis; riboflavin from 2-hydroxy-3-oxobutyl phosphate and 5-amino-6-(D-ribitylamino)uracil: step 1/2. Its function is as follows. Catalyzes the formation of 6,7-dimethyl-8-ribityllumazine by condensation of 5-amino-6-(D-ribitylamino)uracil with 3,4-dihydroxy-2-butanone 4-phosphate. This is the penultimate step in the biosynthesis of riboflavin. This is 6,7-dimethyl-8-ribityllumazine synthase from Lactococcus lactis subsp. lactis (strain IL1403) (Streptococcus lactis).